The primary structure comprises 57 residues: uncharacterized protein (57 aa).

The chain crosses the membrane as a helical span at residues 3–23; sequence PLTLLIIIGGVILGNELIISL. A disordered region spans residues 38 to 57; it reads KHKHKTQENYETFASDKKRT.

It is found in the host membrane. This is an uncharacterized protein from Acidianus bottle-shaped virus (isolate Italy/Pozzuoli) (ABV).